Here is an 88-residue protein sequence, read N- to C-terminus: Antitoxin VapB21 (88 aa).

Functionally, antitoxin component of a type II toxin-antitoxin (TA) system. The polypeptide is Antitoxin VapB21 (vapB21) (Mycobacterium tuberculosis (strain CDC 1551 / Oshkosh)).